The following is a 786-amino-acid chain: DENN domain-containing protein 1C (786 aa).

Residues 13–158 (FDWFFEAGCP…MDSSITVRSE (146 aa)) form the uDENN domain. The region spanning 182–318 (SLPSIPENRN…VVSLLRLRLR (137 aa)) is the cDENN domain. The dDENN domain occupies 320-398 (VALSPGEGVS…ESRLEKLNAG (79 aa)). The FXDXF motif signature appears at 401–405 (FSDQF). The tract at residues 481 to 553 (KDGDSGLQRG…LSPGDTQNPW (73 aa)) is disordered. Over residues 527–541 (LKTEEGPSEPLRERS) the composition is skewed to basic and acidic residues. The segment covering 542 to 552 (PTLSPGDTQNP) has biased composition (polar residues). Serine 565 carries the post-translational modification Phosphoserine. Residues 570 to 579 (DLLSEILDSL) carry the Clathrin box motif. 2 disordered regions span residues 653 to 741 (YSKN…QPPQ) and 762 to 786 (SHVS…CFEN). A compositionally biased stretch (low complexity) spans 657–675 (SCSQPFQQSPPSQGDPGPS). Over residues 706–740 (LLVSTEPNSDAVQRLQSISSPSCSHSAENPRNQPP) the composition is skewed to polar residues. A compositionally biased stretch (basic and acidic residues) spans 770–786 (PQDKQPRVADLKKCFEN).

In terms of assembly, exhibits low nucleotide-independent RAB35-binding activity. Interacts with clathrin heavy chain/CLTC and with AP2A2, but not with AP2B1.

It is found in the cytoplasm. It localises to the cytosol. The protein localises to the cytoplasmic vesicle. The protein resides in the clathrin-coated vesicle. Functionally, guanine nucleotide exchange factor (GEF) which may activate RAB8A, RAB13 and RAB35. Promotes the exchange of GDP to GTP, converting inactive GDP-bound Rab proteins into their active GTP-bound form. This is DENN domain-containing protein 1C (Dennd1c) from Mus musculus (Mouse).